A 424-amino-acid polypeptide reads, in one-letter code: Histidine--tRNA ligase (424 aa).

This sequence belongs to the class-II aminoacyl-tRNA synthetase family. As to quaternary structure, homodimer.

The protein resides in the cytoplasm. It catalyses the reaction tRNA(His) + L-histidine + ATP = L-histidyl-tRNA(His) + AMP + diphosphate + H(+). This Pediococcus pentosaceus (strain ATCC 25745 / CCUG 21536 / LMG 10740 / 183-1w) protein is Histidine--tRNA ligase.